The sequence spans 282 residues: Glutamate--LysW ligase ArgX (282 aa).

Residues K87, K127, G131–V137, and Q167–R178 each bind ATP. In terms of domain architecture, ATP-grasp spans Y91–K277. R192 is a substrate binding site. N202 provides a ligand contact to ATP. Substrate is bound at residue I203–A204. Mg(2+) contacts are provided by D237, E250, and N252. E256–F260 provides a ligand contact to substrate. The GF motif that is essential for ArgX substrate specificity signature appears at G259–F260.

The protein belongs to the RimK family. LysX subfamily. In terms of assembly, homotetramer. Interacts with LysW. Mg(2+) serves as cofactor.

It catalyses the reaction [amino-group carrier protein]-C-terminal-L-glutamate + L-glutamate + ATP = [amino-group carrier protein]-C-terminal-gamma-(L-glutamyl)-L-glutamate + ADP + phosphate + H(+). It functions in the pathway amino-acid biosynthesis; L-arginine biosynthesis. Its function is as follows. Catalyzes the ATP-dependent formation of a covalent bond between the amino group of glutamate and the gamma-carboxyl group of the C-terminal glutamate residue in LysW. The polypeptide is Glutamate--LysW ligase ArgX (Sulfolobus acidocaldarius (strain ATCC 33909 / DSM 639 / JCM 8929 / NBRC 15157 / NCIMB 11770)).